The sequence spans 109 residues: MSDVLERLAQVLEARKDADPDTSYVASLHAKGLNKILEKVGEECTETLLAAKDAEHSGETRDLVYETADLWFHSLVMLSRLGLGPKDVLDELASRFDLSGLEEKASRNP.

The protein belongs to the PRA-PH family.

Its subcellular location is the cytoplasm. The enzyme catalyses 1-(5-phospho-beta-D-ribosyl)-ATP + H2O = 1-(5-phospho-beta-D-ribosyl)-5'-AMP + diphosphate + H(+). Its pathway is amino-acid biosynthesis; L-histidine biosynthesis; L-histidine from 5-phospho-alpha-D-ribose 1-diphosphate: step 2/9. The sequence is that of Phosphoribosyl-ATP pyrophosphatase from Marinobacter nauticus (strain ATCC 700491 / DSM 11845 / VT8) (Marinobacter aquaeolei).